Reading from the N-terminus, the 435-residue chain is Adenylosuccinate synthetase (435 aa).

Residues 11–17 (GDEGKGK) and 39–41 (GHT) contribute to the GTP site. Catalysis depends on D12, which acts as the Proton acceptor. Mg(2+) is bound by residues D12 and G39. Residues 12–15 (DEGK), 37–40 (NAGH), T128, R142, Q223, T238, and R302 each bind IMP. H40 functions as the Proton donor in the catalytic mechanism. 298-304 (SVTGRPR) is a binding site for substrate. Residues R304, 330–332 (KLD), and 412–414 (STG) contribute to the GTP site.

Belongs to the adenylosuccinate synthetase family. Homodimer. It depends on Mg(2+) as a cofactor.

Its subcellular location is the cytoplasm. It carries out the reaction IMP + L-aspartate + GTP = N(6)-(1,2-dicarboxyethyl)-AMP + GDP + phosphate + 2 H(+). It participates in purine metabolism; AMP biosynthesis via de novo pathway; AMP from IMP: step 1/2. Plays an important role in the de novo pathway of purine nucleotide biosynthesis. Catalyzes the first committed step in the biosynthesis of AMP from IMP. The sequence is that of Adenylosuccinate synthetase from Coxiella burnetii (strain RSA 331 / Henzerling II).